Here is a 76-residue protein sequence, read N- to C-terminus: Acyl carrier protein (76 aa).

The 76-residue stretch at Met1–Gln76 folds into the Carrier domain. At Ser36 the chain carries O-(pantetheine 4'-phosphoryl)serine.

This sequence belongs to the acyl carrier protein (ACP) family. 4'-phosphopantetheine is transferred from CoA to a specific serine of apo-ACP by AcpS. This modification is essential for activity because fatty acids are bound in thioester linkage to the sulfhydryl of the prosthetic group.

It localises to the cytoplasm. It functions in the pathway lipid metabolism; fatty acid biosynthesis. In terms of biological role, carrier of the growing fatty acid chain in fatty acid biosynthesis. This Nitratidesulfovibrio vulgaris (strain DSM 19637 / Miyazaki F) (Desulfovibrio vulgaris) protein is Acyl carrier protein.